A 75-amino-acid polypeptide reads, in one-letter code: Small ribosomal subunit protein bS18 (75 aa).

It belongs to the bacterial ribosomal protein bS18 family. In terms of assembly, part of the 30S ribosomal subunit. Forms a tight heterodimer with protein bS6.

In terms of biological role, binds as a heterodimer with protein bS6 to the central domain of the 16S rRNA, where it helps stabilize the platform of the 30S subunit. In Pseudoalteromonas translucida (strain TAC 125), this protein is Small ribosomal subunit protein bS18.